The chain runs to 195 residues: Nuclear transcription factor Y subunit C-10 (195 aa).

Positions 1-24 (MRRPKSSHVRMEPVAPRSHNTMPM) are disordered.

This sequence belongs to the NFYC/HAP5 subunit family. Heterotrimeric transcription factor composed of three components, NF-YA, NF-YB and NF-YC. NF-YB and NF-YC must interact and dimerize for NF-YA association and DNA binding.

Its subcellular location is the nucleus. Stimulates the transcription of various genes by recognizing and binding to a CCAAT motif in promoters. This is Nuclear transcription factor Y subunit C-10 (NFYC10) from Arabidopsis thaliana (Mouse-ear cress).